Reading from the N-terminus, the 302-residue chain is RNA polymerase II holoenzyme cyclin-like subunit (302 aa).

The Cyclin N-terminal domain maps to 53–142 (QQLIKLGKRM…VGECEFSLIS (90 aa)).

This sequence belongs to the cyclin family. Cyclin C subfamily. In terms of assembly, component of the srb8-11 complex, a regulatory module of the Mediator complex.

The protein localises to the nucleus. Component of the srb8-11 complex. The srb8-11 complex is a regulatory module of the Mediator complex which is itself involved in regulation of basal and activated RNA polymerase II-dependent transcription. The srb8-11 complex may be involved in the transcriptional repression of a subset of genes regulated by Mediator. It may inhibit the association of the Mediator complex with RNA polymerase II to form the holoenzyme complex. The srb8-11 complex phosphorylates the C-terminal domain (CTD) of the largest subunit of RNA polymerase II. The polypeptide is RNA polymerase II holoenzyme cyclin-like subunit (ssn8) (Emericella nidulans (strain FGSC A4 / ATCC 38163 / CBS 112.46 / NRRL 194 / M139) (Aspergillus nidulans)).